The primary structure comprises 244 residues: 5'-nucleotidase SurE (244 aa).

Residues D8, D9, S39, and N96 each coordinate a divalent metal cation.

It belongs to the SurE nucleotidase family. The cofactor is a divalent metal cation.

The protein localises to the cytoplasm. The catalysed reaction is a ribonucleoside 5'-phosphate + H2O = a ribonucleoside + phosphate. Its function is as follows. Nucleotidase that shows phosphatase activity on nucleoside 5'-monophosphates. The chain is 5'-nucleotidase SurE from Thermus thermophilus (strain ATCC 27634 / DSM 579 / HB8).